Reading from the N-terminus, the 462-residue chain is Elongation factor 1-alpha, somatic form (462 aa).

Gly-2 is modified (n,N,N-trimethylglycine). One can recognise a tr-type G domain in the interval 5-242 (KTHINIVVIG…DCILPPSRPT (238 aa)). Residues 14–21 (GHVDSGKS) are G1. 14 to 21 (GHVDSGKS) lines the GTP pocket. Residues 70–74 (GITID) are G2. A G3 region spans residues 91-94 (DAPG). GTP contacts are provided by residues 91–95 (DAPGH) and 153–156 (NKMD). The G4 stretch occupies residues 153–156 (NKMD). The segment at 194–196 (SGW) is G5. Residues Glu-301 and Glu-374 each carry the 5-glutamyl glycerylphosphorylethanolamine modification.

This sequence belongs to the TRAFAC class translation factor GTPase superfamily. Classic translation factor GTPase family. EF-Tu/EF-1A subfamily.

The protein localises to the cytoplasm. In terms of biological role, this protein promotes the GTP-dependent binding of aminoacyl-tRNA to the A-site of ribosomes during protein biosynthesis. This is Elongation factor 1-alpha, somatic form (eef1as) from Xenopus laevis (African clawed frog).